A 1115-amino-acid polypeptide reads, in one-letter code: Tbc2 translation factor, chloroplastic (1115 aa).

2 stretches are compositionally biased toward low complexity: residues 69–87 (TASVPSTSGASPSGSQLSS) and 163–175 (RRAGSGASTSGRA). Disordered stretches follow at residues 69–90 (TASVPSTSGASPSGSQLSSKAL) and 163–210 (RRAG…SSSS). Over residues 176-186 (RGWGSGPGRNG) the composition is skewed to gly residues. Residues 187–210 (SGSSSVSVNGSGSSSNGSSSSSSS) show a composition bias toward low complexity. Repeat copies occupy residues 483–521 (LVLELSRARLTSFSPLQLAKAVQGLAALRYRPSPEWVEA), 607–645 (LDLTSRLLAAGGFSGGELQQLLEGLTRLALQPPLEWMQA), 685–723 (LAATQANMKQLLADTTCSAALLTALRRLNIEPPPGWVGA), 724–763 (LLEESRSALKNRCTDLHLANLAGSLAAWGVRPDGRWAARL), 764–803 (MWRSQVLMNEDRMSPRALVALLQAMVSLGLSPNPVWTQLC), 804–842 (LQAAVRRASQPAFEPHHYGTLMASLHALGIQPPQEWLTR), 843–880 (MLLSTYRCWDRFSVTHWSSLLPALVLLKARPPREWLRR), 990–1029 (PAAHAATSTTTATAVAHPQPQLLPQAQALPQPGPEWQAAW), and 1030–1068 (WAASTRLLLRVRYAPSELVLTAGWLGSLGLRPPPEWLQA). A 9 X 38 AA approximate repeats region spans residues 483–1068 (LVLELSRARL…LRPPPEWLQA (586 aa)).

As to quaternary structure, part of a 400 kDa complex which is not stably associated with RNA.

It is found in the plastid. The protein resides in the chloroplast stroma. Required for expression of the chloroplast encoded psbC mRNA, most likely for translation initiation. Interacts with the 5'-UTR of psbC. This is Tbc2 translation factor, chloroplastic (TBC2) from Chlamydomonas reinhardtii (Chlamydomonas smithii).